The sequence spans 339 residues: D-erythrose-4-phosphate dehydrogenase (339 aa).

Residues 12-13 (RI) and R81 each bind NAD(+). Residues 154–156 (SCT), R200, 213–214 (TK), and R236 contribute to the substrate site. C155 functions as the Nucleophile in the catalytic mechanism. N318 serves as a coordination point for NAD(+).

Homotetramer.

The protein resides in the cytoplasm. It catalyses the reaction D-erythrose 4-phosphate + NAD(+) + H2O = 4-phospho-D-erythronate + NADH + 2 H(+). Its pathway is cofactor biosynthesis; pyridoxine 5'-phosphate biosynthesis; pyridoxine 5'-phosphate from D-erythrose 4-phosphate: step 1/5. Functionally, catalyzes the NAD-dependent conversion of D-erythrose 4-phosphate to 4-phosphoerythronate. This Escherichia coli (strain K12) protein is D-erythrose-4-phosphate dehydrogenase (epd).